The chain runs to 177 residues: GTP-dependent dephospho-CoA kinase (177 aa).

5 residues coordinate GTP: D45, V46, V47, D64, and E120.

Belongs to the GTP-dependent DPCK family.

The catalysed reaction is 3'-dephospho-CoA + GTP = GDP + CoA + H(+). The protein operates within cofactor biosynthesis; coenzyme A biosynthesis. Its function is as follows. Catalyzes the GTP-dependent phosphorylation of the 3'-hydroxyl group of dephosphocoenzyme A to form coenzyme A (CoA). The sequence is that of GTP-dependent dephospho-CoA kinase from Halobacterium salinarum (strain ATCC 29341 / DSM 671 / R1).